Consider the following 191-residue polypeptide: UPF0312 protein Sbal_3041 (191 aa).

Positions 1-22 (MKKQLLSALIGASLLAPMAASA) are cleaved as a signal peptide.

The protein belongs to the UPF0312 family. Type 1 subfamily.

It is found in the periplasm. This Shewanella baltica (strain OS155 / ATCC BAA-1091) protein is UPF0312 protein Sbal_3041.